We begin with the raw amino-acid sequence, 523 residues long: FAD:protein FMN transferase (523 aa).

A run of 3 helical transmembrane segments spans residues 88–108, 118–138, and 169–189; these read LLAG…VALA, GGAA…LVLL, and GLAL…TAPA. FAD contacts are provided by residues 277–279 and Asp336; that span reads LFD. Residue Ala339 coordinates Mg(2+). FAD-binding positions include Lys342 and 423-425; that span reads HII. The Mg(2+) site is built by Asp450 and Thr454.

In the N-terminal section; belongs to the RseC family. It in the C-terminal section; belongs to the ApbE family. Requires Mg(2+) as cofactor.

It localises to the cell membrane. The catalysed reaction is L-threonyl-[protein] + FAD = FMN-L-threonyl-[protein] + AMP + H(+). Flavin transferase that catalyzes the transfer of the FMN moiety of FAD and its covalent binding to the hydroxyl group of a threonine residue in a target flavoprotein. Is likely involved in the modification of RnfG and RnfD. Required for nitrogen fixation. The chain is FAD:protein FMN transferase from Rhodobacter capsulatus (Rhodopseudomonas capsulata).